Reading from the N-terminus, the 374-residue chain is Hydroxylysine kinase (374 aa).

Asp228 acts as the Proton acceptor in catalysis.

The protein belongs to the aminoglycoside phosphotransferase family.

It localises to the cytoplasm. It carries out the reaction (5R)-5-hydroxy-L-lysine + GTP = (5R)-5-phosphooxy-L-lysine + GDP + H(+). Catalyzes the GTP-dependent phosphorylation of 5-hydroxy-L-lysine. The polypeptide is Hydroxylysine kinase (hykk) (Xenopus laevis (African clawed frog)).